A 112-amino-acid chain; its full sequence is ATP synthase subunit c (112 aa).

The next 2 helical transmembrane spans lie at 36–56 (FSVL…AIGM) and 81–101 (MFIA…IALI).

The protein belongs to the ATPase C chain family. F-type ATPases have 2 components, F(1) - the catalytic core - and F(0) - the membrane proton channel. F(1) has five subunits: alpha(3), beta(3), gamma(1), delta(1), epsilon(1). F(0) has three main subunits: a(1), b(2) and c(10-14). The alpha and beta chains form an alternating ring which encloses part of the gamma chain. F(1) is attached to F(0) by a central stalk formed by the gamma and epsilon chains, while a peripheral stalk is formed by the delta and b chains.

The protein resides in the cell inner membrane. In terms of biological role, f(1)F(0) ATP synthase produces ATP from ADP in the presence of a proton or sodium gradient. F-type ATPases consist of two structural domains, F(1) containing the extramembraneous catalytic core and F(0) containing the membrane proton channel, linked together by a central stalk and a peripheral stalk. During catalysis, ATP synthesis in the catalytic domain of F(1) is coupled via a rotary mechanism of the central stalk subunits to proton translocation. Key component of the F(0) channel; it plays a direct role in translocation across the membrane. A homomeric c-ring of between 10-14 subunits forms the central stalk rotor element with the F(1) delta and epsilon subunits. This is ATP synthase subunit c from Campylobacter jejuni subsp. doylei (strain ATCC BAA-1458 / RM4099 / 269.97).